Here is a 189-residue protein sequence, read N- to C-terminus: Glutathione-dependent formaldehyde-activating enzyme (189 aa).

In terms of domain architecture, CENP-V/GFA spans 20-167; the sequence is FAGGTLVCKC…LKELGLEPYD (148 aa). The Zn(2+) site is built by Cys27, Cys29, Cys48, Cys50, Cys53, Cys95, and Cys98.

This sequence belongs to the Gfa family. It depends on Zn(2+) as a cofactor.

The enzyme catalyses S-(hydroxymethyl)glutathione = glutathione + formaldehyde. The protein operates within one-carbon metabolism; formaldehyde degradation; formate from formaldehyde (glutathione route): step 1/3. Its function is as follows. Catalyzes the condensation of formaldehyde and glutathione to S-hydroxymethylglutathione. The chain is Glutathione-dependent formaldehyde-activating enzyme from Rhodopseudomonas palustris (strain BisA53).